Reading from the N-terminus, the 674-residue chain is Protein asunder (674 aa).

Residues H516–S538 adopt a coiled-coil conformation. The segment at P560–S579 is disordered. Residues E564–P577 are compositionally biased toward polar residues. Positions L601–R607 match the Nuclear localization signal (NLS) motif.

It belongs to the Integrator subunit 13 family. As to quaternary structure, belongs to the multiprotein complex Integrator, at least composed of IntS1, IntS2, IntS3, IntS4, omd/IntS5, IntS6, defl/IntS7, IntS8, IntS9, IntS10, IntS11, IntS12, asun/IntS13, IntS14 and IntS15. The core complex associates with protein phosphatase 2A subunits mts/PP2A and Pp2A-29B, to form the Integrator-PP2A (INTAC) complex. Post-translationally, phosphorylated.

It localises to the nucleus. Its subcellular location is the cytoplasm. The protein resides in the perinuclear region. Its function is as follows. Component of the integrator complex, a multiprotein complex that terminates RNA polymerase II (Pol II) transcription in the promoter-proximal region of genes. The integrator complex provides a quality checkpoint during transcription elongation by driving premature transcription termination of transcripts that are unfavorably configured for transcriptional elongation: the complex terminates transcription by (1) catalyzing dephosphorylation of the C-terminal domain (CTD) of Pol II subunit Polr2A/Rbp1 and Spt5, and (2) degrading the exiting nascent RNA transcript via endonuclease activity. The integrator complex is also involved in the 3'-end processing of the U7 snRNA, and also the spliceosomal snRNAs U1, U2, U4 and U5. The chain is Protein asunder (asun) from Drosophila pseudoobscura pseudoobscura (Fruit fly).